Reading from the N-terminus, the 463-residue chain is NF-kappa-B-activating protein (463 aa).

Residues 1 to 14 show a composition bias toward basic residues; that stretch reads MRSRSRSRSRQRER. Positions 1 to 358 are disordered; the sequence is MRSRSRSRSR…GGSLNQKDFG (358 aa). Composition is skewed to basic and acidic residues over residues 15 to 29 and 39 to 71; these read RRSD…ERRT and VSRE…DAVP. Residues 78–98 show a composition bias toward low complexity; the sequence is SSPSRSSSSSSSDRSSSSRSP. Basic and acidic residues predominate over residues 107–125; it reads KSVERWPNDRYHENNDRRQ. 3 positions are modified to phosphoserine: Ser-136, Ser-189, and Ser-191. Thr-195 is subject to Phosphothreonine. Residues 208–238 are compositionally biased toward basic residues; sequence PKKKKKKGKRKHKKSEKKSKKKSKKSKKKKS. Over residues 241-267 the composition is skewed to low complexity; the sequence is ESSSSSSSSSSEDSSDESSSSSSSSSS. A compositionally biased stretch (acidic residues) spans 268–278; the sequence is DSEDESEEEDV. Basic and acidic residues predominate over residues 279–288; that stretch reads WLEKTADGIK. Basic residues predominate over residues 289-312; that stretch reads KPKKKKSSTSKKDKKSKKKKKKRK. Basic and acidic residues predominate over residues 330–340; it reads KNKESASHNDE.

Belongs to the NKAP family.

The protein resides in the nucleus. Functionally, tumor suppressor involved in maintaining genome integrity. Influences gene expression and mRNA splicing. The sequence is that of NF-kappa-B-activating protein from Drosophila melanogaster (Fruit fly).